Consider the following 338-residue polypeptide: ABC transporter I family member 6, chloroplastic (338 aa).

A chloroplast-targeting transit peptide spans 1–66; it reads MAGVNLQLRH…RTTRRSVIVS (66 aa). An ABC transporter domain is found at 92 to 338; the sequence is LEVRDLRAVI…EKEGYKAISG (247 aa). 126–133 contacts ATP; it reads GKNGSGKS.

Belongs to the ABC transporter superfamily. ABCI family. Interacts with NAP6. In terms of tissue distribution, present in all organs, with higher levels in aerial parts.

It is found in the plastid. Its subcellular location is the chloroplast. Its function is as follows. Essential protein. Required during embryo development, especially at early stages. Involved in chloroplast differentiation. The sequence is that of ABC transporter I family member 6, chloroplastic (ABCI6) from Arabidopsis thaliana (Mouse-ear cress).